Reading from the N-terminus, the 97-residue chain is Small ribosomal subunit protein bS20 (97 aa).

Belongs to the bacterial ribosomal protein bS20 family.

Functionally, binds directly to 16S ribosomal RNA. The polypeptide is Small ribosomal subunit protein bS20 (Prochlorococcus marinus subsp. pastoris (strain CCMP1986 / NIES-2087 / MED4)).